A 145-amino-acid chain; its full sequence is Large ribosomal subunit protein uL11 (145 aa).

This sequence belongs to the universal ribosomal protein uL11 family. In terms of assembly, part of the ribosomal stalk of the 50S ribosomal subunit. Interacts with L10 and the large rRNA to form the base of the stalk. L10 forms an elongated spine to which L12 dimers bind in a sequential fashion forming a multimeric L10(L12)X complex. In terms of processing, one or more lysine residues are methylated.

Forms part of the ribosomal stalk which helps the ribosome interact with GTP-bound translation factors. The sequence is that of Large ribosomal subunit protein uL11 from Rubrobacter xylanophilus (strain DSM 9941 / JCM 11954 / NBRC 16129 / PRD-1).